We begin with the raw amino-acid sequence, 213 residues long: Uridine kinase (213 aa).

15–22 (GASASGKS) contacts ATP.

The protein belongs to the uridine kinase family.

Its subcellular location is the cytoplasm. It carries out the reaction uridine + ATP = UMP + ADP + H(+). The enzyme catalyses cytidine + ATP = CMP + ADP + H(+). The protein operates within pyrimidine metabolism; CTP biosynthesis via salvage pathway; CTP from cytidine: step 1/3. It participates in pyrimidine metabolism; UMP biosynthesis via salvage pathway; UMP from uridine: step 1/1. The chain is Uridine kinase from Erwinia tasmaniensis (strain DSM 17950 / CFBP 7177 / CIP 109463 / NCPPB 4357 / Et1/99).